The sequence spans 114 residues: Superoxide dismutase [Cu-Zn] (114 aa).

His37, His39, and His54 together coordinate Cu cation. Residues 48 to 68 (CMSSGPHFNPRNKEHGAPTDE) are disordered. 4 residues coordinate Zn(2+): His54, His62, His71, and Asp74. Residues 58–68 (RNKEHGAPTDE) are compositionally biased toward basic and acidic residues. Position 111 (His111) interacts with Cu cation.

The protein belongs to the Cu-Zn superoxide dismutase family. As to quaternary structure, homodimer. It depends on Cu cation as a cofactor. Zn(2+) is required as a cofactor.

The protein resides in the cytoplasm. It catalyses the reaction 2 superoxide + 2 H(+) = H2O2 + O2. Functionally, destroys radicals which are normally produced within the cells and which are toxic to biological systems. The chain is Superoxide dismutase [Cu-Zn] from Drosophila miranda (Fruit fly).